The chain runs to 150 residues: Lipoprotein signal peptidase (150 aa).

The next 2 membrane-spanning stretches (helical) occupy residues 59–79 (VFVG…RYLP) and 84–101 (LLRL…GNLI). Residues Asp111 and Asp125 contribute to the active site. The helical transmembrane segment at 117 to 137 (IWPVFNLADMAIVFGVIILCW) threads the bilayer.

The protein belongs to the peptidase A8 family.

The protein localises to the cell membrane. The enzyme catalyses Release of signal peptides from bacterial membrane prolipoproteins. Hydrolyzes -Xaa-Yaa-Zaa-|-(S,diacylglyceryl)Cys-, in which Xaa is hydrophobic (preferably Leu), and Yaa (Ala or Ser) and Zaa (Gly or Ala) have small, neutral side chains.. It participates in protein modification; lipoprotein biosynthesis (signal peptide cleavage). Its function is as follows. This protein specifically catalyzes the removal of signal peptides from prolipoproteins. The polypeptide is Lipoprotein signal peptidase (Moorella thermoacetica (strain ATCC 39073 / JCM 9320)).